A 276-amino-acid chain; its full sequence is Undecaprenyl-diphosphatase (276 aa).

Transmembrane regions (helical) follow at residues 43-63 (RAMAFNIIIQLGAILAVVWEF), 85-105 (LNLLIAFMPAVVLGVIFADTI), 109-129 (LFNAITVATALVVGGVIMLWA), 183-203 (AATEFSFFLAMPTMVGAAVYS), 218-238 (VFAIGFITSFVFAMIAVRALL), and 254-274 (IAFGLLILATWQFGWIDWASA).

Belongs to the UppP family.

Its subcellular location is the cell inner membrane. The enzyme catalyses di-trans,octa-cis-undecaprenyl diphosphate + H2O = di-trans,octa-cis-undecaprenyl phosphate + phosphate + H(+). Catalyzes the dephosphorylation of undecaprenyl diphosphate (UPP). Confers resistance to bacitracin. This is Undecaprenyl-diphosphatase from Pseudomonas syringae pv. tomato (strain ATCC BAA-871 / DC3000).